We begin with the raw amino-acid sequence, 427 residues long: MNSLRLEPISRVAGEVNLPGSKSVSNRALLLAALARGTTRLTNLLDSDDIRHMLAALTQLGVKYKLSADKTECTVHGLGRSFAVSAPVNLFLGNAGTAMRPLCAALCLGSGEYMLGGEPRMEERPIGHLVDCLALKGAHIQYLKKDGYPPLVVDAKGLWGGDVHVDGSVSSQFLTAFLMAAPAMAPVIPRIHIKGELVSKPYIDITLHIMNSSGVVIEHDNYKLFYIKGNQSIVSPGDFLVEGDASSASYFLAAGAIKGKVRVTGIGKHSIGDIHFADVLERMGARITWGDDFIEAEQGPLHGVDMDMNHIPDXAMTIAXVALFAEGPTSIRNIYNWRVKETDRLHAMATDVRKLGVSEEGDLHYITVTPPTQLKHAEIDTYKHHRIAMCFSLVALSDIAVTINDPGCTSKTFPDYFDKLASVSQAV.

3-phosphoshikimate is bound by residues Lys-22, Ser-23, and Arg-27. Lys-22 contributes to the phosphoenolpyruvate binding site. Phosphoenolpyruvate-binding residues include Gly-96 and Arg-124. 7 residues coordinate 3-phosphoshikimate: Ser-170, Ser-171, Gln-172, Ser-199, Asp-313, Asn-336, and Lys-340. Gln-172 is a phosphoenolpyruvate binding site. Asp-313 serves as the catalytic Proton acceptor. Residues Arg-344, Arg-386, and Lys-411 each coordinate phosphoenolpyruvate.

The protein belongs to the EPSP synthase family. As to quaternary structure, monomer.

The protein resides in the cytoplasm. It catalyses the reaction 3-phosphoshikimate + phosphoenolpyruvate = 5-O-(1-carboxyvinyl)-3-phosphoshikimate + phosphate. Its pathway is metabolic intermediate biosynthesis; chorismate biosynthesis; chorismate from D-erythrose 4-phosphate and phosphoenolpyruvate: step 6/7. Catalyzes the transfer of the enolpyruvyl moiety of phosphoenolpyruvate (PEP) to the 5-hydroxyl of shikimate-3-phosphate (S3P) to produce enolpyruvyl shikimate-3-phosphate and inorganic phosphate. In Aeromonas salmonicida, this protein is 3-phosphoshikimate 1-carboxyvinyltransferase.